Consider the following 185-residue polypeptide: Ribosome-recycling factor (185 aa).

The protein belongs to the RRF family.

The protein resides in the cytoplasm. Functionally, responsible for the release of ribosomes from messenger RNA at the termination of protein biosynthesis. May increase the efficiency of translation by recycling ribosomes from one round of translation to another. The polypeptide is Ribosome-recycling factor (Dehalococcoides mccartyi (strain ATCC BAA-2266 / KCTC 15142 / 195) (Dehalococcoides ethenogenes (strain 195))).